Here is a 332-residue protein sequence, read N- to C-terminus: Ribose-phosphate pyrophosphokinase (332 aa).

Residues 43–45 and 102–103 each bind ATP; these read DGE and RQ. The Mg(2+) site is built by His-136 and Asp-176. The active site involves Lys-199. Residues Arg-201, Asp-225, and 229 to 233 contribute to the D-ribose 5-phosphate site; that span reads DTGGT.

It belongs to the ribose-phosphate pyrophosphokinase family. Class I subfamily. As to quaternary structure, homohexamer. Mg(2+) is required as a cofactor.

The protein localises to the cytoplasm. The enzyme catalyses D-ribose 5-phosphate + ATP = 5-phospho-alpha-D-ribose 1-diphosphate + AMP + H(+). It functions in the pathway metabolic intermediate biosynthesis; 5-phospho-alpha-D-ribose 1-diphosphate biosynthesis; 5-phospho-alpha-D-ribose 1-diphosphate from D-ribose 5-phosphate (route I): step 1/1. Its function is as follows. Involved in the biosynthesis of the central metabolite phospho-alpha-D-ribosyl-1-pyrophosphate (PRPP) via the transfer of pyrophosphoryl group from ATP to 1-hydroxyl of ribose-5-phosphate (Rib-5-P). This Mycoplasma genitalium (strain ATCC 33530 / DSM 19775 / NCTC 10195 / G37) (Mycoplasmoides genitalium) protein is Ribose-phosphate pyrophosphokinase.